The primary structure comprises 554 residues: Carboxylesterase 1C (554 aa).

Positions 1-18 are cleaved as a signal peptide; that stretch reads MWLHALVWASLAVCPILG. N-linked (GlcNAc...) asparagine glycosylation is present at N79. An intrachain disulfide couples C87 to C116. S221 functions as the Acyl-ester intermediate in the catalytic mechanism. Residues C273 and C284 are joined by a disulfide bond. 2 N-linked (GlcNAc...) asparagine glycosylation sites follow: N274 and N304. E342 serves as the catalytic Charge relay system. N377 carries an N-linked (GlcNAc...) asparagine glycan. H455 (charge relay system) is an active-site residue. S473 is modified (phosphoserine). The N-linked (GlcNAc...) asparagine glycan is linked to N478. The Prevents secretion from ER motif lies at 551–554; it reads TEHK.

It belongs to the type-B carboxylesterase/lipase family. In terms of tissue distribution, expressed in lung, kidney and liver.

The protein localises to the endoplasmic reticulum lumen. It carries out the reaction a carboxylic ester + H2O = an alcohol + a carboxylate + H(+). Involved in the detoxification of xenobiotics and in the activation of ester and amide prodrugs. Involved in the extracellular metabolism of lung surfactant. This Mus musculus (Mouse) protein is Carboxylesterase 1C (Ces1c).